We begin with the raw amino-acid sequence, 894 residues long: Glutamate receptor 3 (894 aa).

The N-terminal stretch at 1-28 (MARQKKMGQNVLRAVFFLVLGLLGHSHG) is a signal peptide. Residues 29–552 (GFPNTISIGG…GVFSFLDPLA (524 aa)) are Extracellular-facing. Asn-63, Asn-266, Asn-380, Asn-415, and Asn-422 each carry an N-linked (GlcNAc...) asparagine glycan. Cys-91 and Cys-340 form a disulfide bridge. L-glutamate contacts are provided by Pro-508, Thr-510, and Arg-515. Residues 553-573 (YEIWMCIVFASIGVSVVLFLV) form a helical membrane-spanning segment. The Cytoplasmic segment spans residues 574–602 (SRFSPYEWHLEDNNEEPRDPQSPPDPPNE). An intramembrane region (helical; Pore-forming) is located at residues 603 to 618 (FGIFNSLWFSLGAFMQ). An intramembrane segment occupies 619-621 (QGC). A lipid anchor (S-palmitoyl cysteine) is attached at Cys-621. The Cytoplasmic portion of the chain corresponds to 622 to 627 (DISPRS). The helical transmembrane segment at 628–648 (LSGRIVGGVWWFFTLIIISSY) threads the bilayer. Residues 649–823 (TANLAAFLTV…DKTSALSLSN (175 aa)) are Extracellular-facing. L-glutamate contacts are provided by Ser-686, Thr-687, and Glu-737. A disulfide bond links Cys-750 and Cys-805. Residues 824–844 (VAGVFYILVGGLGLAMMVALI) traverse the membrane as a helical segment. Topologically, residues 845-894 (EFCYKSRAESKRMKLTKNTQNFKPAPATNTQNYATYREGYNVYGTESVKI) are cytoplasmic. Residue Cys-847 is the site of S-palmitoyl cysteine attachment. Tyr-877 and Tyr-887 each carry phosphotyrosine.

This sequence belongs to the glutamate-gated ion channel (TC 1.A.10.1) family. GRIA3 subfamily. In terms of assembly, homotetramer or heterotetramer of pore-forming glutamate receptor subunits. Tetramers may be formed by the dimerization of dimers. Interacts with PICK1, GRIP1 and GRIP2. Found in a complex with GRIA1, GRIA2, GRIA4, CNIH2, CNIH3, CACNG2, CACNG3, CACNG4, CACNG5, CACNG7 and CACNG8. Interacts with CACNG5. Found in a complex with GRIA1, GRIA2, GRIA4, DLG4, CACNG8 and CNIH2.

The protein resides in the cell membrane. It is found in the postsynaptic cell membrane. The protein localises to the postsynaptic density membrane. It carries out the reaction Ca(2+)(in) = Ca(2+)(out). Functionally, ionotropic glutamate receptor that functions as a ligand-gated cation channel, gated by L-glutamate and glutamatergic agonists such as alpha-amino-3-hydroxy-5-methyl-4-isoxazolepropionic acid (AMPA), quisqualic acid, and kainic acid. L-glutamate acts as an excitatory neurotransmitter at many synapses in the central nervous system and plays an important role in fast excitatory synaptic transmission by inducing long-term potentiation. Binding of the excitatory neurotransmitter L-glutamate induces a conformation change, leading to the opening of the cation channel, and thereby converts the chemical signal to an electrical impulse upon entry of calcium. The receptor then desensitizes rapidly and enters a transient inactive state, characterized by the presence of bound agonist. In the presence of CACNG8, shows resensitization which is characterized by a delayed accumulation of current flux upon continued application of glutamate. In Macaca fascicularis (Crab-eating macaque), this protein is Glutamate receptor 3.